The primary structure comprises 210 residues: Putative 4-hydroxy-4-methyl-2-oxoglutarate aldolase (210 aa).

Residues 87–90 and Arg-109 contribute to the substrate site; that span reads GDFV. Position 110 (Asp-110) interacts with a divalent metal cation.

This sequence belongs to the class II aldolase/RraA-like family. In terms of assembly, homotrimer. Requires a divalent metal cation as cofactor.

The enzyme catalyses 4-hydroxy-4-methyl-2-oxoglutarate = 2 pyruvate. It carries out the reaction oxaloacetate + H(+) = pyruvate + CO2. Catalyzes the aldol cleavage of 4-hydroxy-4-methyl-2-oxoglutarate (HMG) into 2 molecules of pyruvate. Also contains a secondary oxaloacetate (OAA) decarboxylase activity due to the common pyruvate enolate transition state formed following C-C bond cleavage in the retro-aldol and decarboxylation reactions. In Halalkalibacterium halodurans (strain ATCC BAA-125 / DSM 18197 / FERM 7344 / JCM 9153 / C-125) (Bacillus halodurans), this protein is Putative 4-hydroxy-4-methyl-2-oxoglutarate aldolase.